The chain runs to 177 residues: Large ribosomal subunit protein uL6 (177 aa).

The protein belongs to the universal ribosomal protein uL6 family. Part of the 50S ribosomal subunit.

Its function is as follows. This protein binds to the 23S rRNA, and is important in its secondary structure. It is located near the subunit interface in the base of the L7/L12 stalk, and near the tRNA binding site of the peptidyltransferase center. The chain is Large ribosomal subunit protein uL6 from Actinobacillus succinogenes (strain ATCC 55618 / DSM 22257 / CCUG 43843 / 130Z).